The following is a 280-amino-acid chain: Pre-mRNA-splicing factor PRP21 (280 aa).

One copy of the SURP motif 1 repeat lies at 11–49 (DIKTTVNYIKQHGVEFENKLLEDERFSFIKKDDPLHEYY). The disordered stretch occupies residues 53 to 72 (MNEPTDTVSGEDNDRKSERE). Residues 95 to 135 (VIKLTARYYAKDKSIVEQMISKDGEARLNFMNSSHPLHKTF) form an SURP motif 2 repeat. 2 stretches are compositionally biased toward basic and acidic residues: residues 246 to 261 (EKIV…GDSK) and 269 to 280 (AVGETRLKKSKK). Positions 246–280 (EKIVSDQGKQKGGDSKGKKRKIRAVGETRLKKSKK) are disordered.

In terms of assembly, belongs to the CWC complex (or CEF1-associated complex), a spliceosome sub-complex reminiscent of a late-stage spliceosome composed of the U2, U5 and U6 snRNAs and at least BUD13, BUD31, BRR2, CDC40, CEF1, CLF1, CUS1, CWC2, CWC15, CWC21, CWC22, CWC23, CWC24, CWC25, CWC27, ECM2, HSH155, IST3, ISY1, LEA1, MSL1, NTC20, PRP8, PRP9, PRP11, PRP19, PRP21, PRP22, PRP45, PRP46, SLU7, SMB1, SMD1, SMD2, SMD3, SMX2, SMX3, SNT309, SNU114, SPP2, SYF1, SYF2, RSE1 and YJU2.

Its subcellular location is the nucleus. MRNA splicing factors, PRP9, PRP11, and PRP21, are necessary for binding of the U2 snRNP to the pre-mRNA in an early step of spliceosome assembly. This is Pre-mRNA-splicing factor PRP21 (PRP21) from Saccharomyces cerevisiae (strain ATCC 204508 / S288c) (Baker's yeast).